Reading from the N-terminus, the 551-residue chain is Glucose-6-phosphate isomerase (551 aa).

Catalysis depends on Glu349, which acts as the Proton donor. Catalysis depends on residues His378 and Lys480.

The protein belongs to the GPI family.

It localises to the cytoplasm. The enzyme catalyses alpha-D-glucose 6-phosphate = beta-D-fructose 6-phosphate. It functions in the pathway carbohydrate biosynthesis; gluconeogenesis. Its pathway is carbohydrate degradation; glycolysis; D-glyceraldehyde 3-phosphate and glycerone phosphate from D-glucose: step 2/4. Functionally, catalyzes the reversible isomerization of glucose-6-phosphate to fructose-6-phosphate. This Parasynechococcus marenigrum (strain WH8102) protein is Glucose-6-phosphate isomerase.